The following is a 370-amino-acid chain: Putative FBD-associated F-box protein At1g50980 (370 aa).

An F-box domain is found at 31–77 (IRTISEFPDKVLLKILSLLPSKDVVATGVLSKRWRSLWKDVKTFRTS). Positions 292–343 (LMGNQPDLIPKSLSSHLEILEWRQYNDTAQEREAAKYILANASGLRKATFYT) constitute an FBD domain.

The protein is Putative FBD-associated F-box protein At1g50980 of Arabidopsis thaliana (Mouse-ear cress).